A 130-amino-acid polypeptide reads, in one-letter code: Small ribosomal subunit protein uS12c (130 aa).

The protein belongs to the universal ribosomal protein uS12 family. In terms of assembly, part of the 30S ribosomal subunit.

It localises to the plastid. The protein localises to the chloroplast. In terms of biological role, with S4 and S5 plays an important role in translational accuracy. Located at the interface of the 30S and 50S subunits. The polypeptide is Small ribosomal subunit protein uS12c (rps12) (Tetradesmus obliquus (Green alga)).